A 156-amino-acid polypeptide reads, in one-letter code: Maintenance of carboxysome distribution protein B (156 aa).

A required for interaction with McdA:DNA complex region spans residues 1-55 (MSNNALDRLINKQKPKVPPRNDVVSESVSNDIKTQGQQELNTSLPPSDTKATPEE). Positions 1-79 (MSNNALDRLI…QKPKLSPDTF (79 aa)) are disordered. The segment covering 24-50 (VSESVSNDIKTQGQQELNTSLPPSDTK) has biased composition (polar residues). Basic and acidic residues predominate over residues 51 to 63 (ATPEEMPTSHESE). A coiled-coil region spans residues 122-156 (PEELAQVIQLAQERLSQRKAIADYKRAKTMQERFL).

In terms of assembly, homodimerizes; may exist in higher order oligomers in solution. Forms a complex with McdA:DNA. Homohexamerizes, interacts with shell components of the carboxysome.

The protein localises to the carboxysome. McdA and McdB together mediate carboxysome (Cb) spacing, size, ultrastructure and probably inheritance in the cell, together they prevent Cb aggregation. McdA is an ATPase that forms dynamic gradients on the nucleoid in response to adapter protein McdB, which associates with carboxysomes. The interplay between McdA gradients on the nucleoid and McdB-bound carboxysomes result in the equal spacing of Cbs along the cell length. Stimulates the ATPase activity of McdA, causing McdA to be released from DNA. Undergoes liquid-liquid phase separation. Its function is as follows. Incorrect positioning (aggregation) of carboxysomes results in reduced CO(2) fixation by encapsulated ribulose-1,5-bisphosphate carboxylase (RuBisCO, cbbL/cbbS), which leads to slower growth. The polypeptide is Maintenance of carboxysome distribution protein B (Gloeothece citriformis (strain PCC 7424) (Cyanothece sp. (strain PCC 7424))).